A 1052-amino-acid chain; its full sequence is Error-prone DNA polymerase (1052 aa).

This sequence belongs to the DNA polymerase type-C family. DnaE2 subfamily.

Its subcellular location is the cytoplasm. It carries out the reaction DNA(n) + a 2'-deoxyribonucleoside 5'-triphosphate = DNA(n+1) + diphosphate. DNA polymerase involved in damage-induced mutagenesis and translesion synthesis (TLS). It is not the major replicative DNA polymerase. The chain is Error-prone DNA polymerase from Bordetella bronchiseptica (strain ATCC BAA-588 / NCTC 13252 / RB50) (Alcaligenes bronchisepticus).